We begin with the raw amino-acid sequence, 335 residues long: UDP-3-O-acylglucosamine N-acyltransferase (335 aa).

The Proton acceptor role is filled by His-225.

The protein belongs to the transferase hexapeptide repeat family. LpxD subfamily. Homotrimer.

It carries out the reaction a UDP-3-O-[(3R)-3-hydroxyacyl]-alpha-D-glucosamine + a (3R)-hydroxyacyl-[ACP] = a UDP-2-N,3-O-bis[(3R)-3-hydroxyacyl]-alpha-D-glucosamine + holo-[ACP] + H(+). It functions in the pathway bacterial outer membrane biogenesis; LPS lipid A biosynthesis. Functionally, catalyzes the N-acylation of UDP-3-O-acylglucosamine using 3-hydroxyacyl-ACP as the acyl donor. Is involved in the biosynthesis of lipid A, a phosphorylated glycolipid that anchors the lipopolysaccharide to the outer membrane of the cell. This chain is UDP-3-O-acylglucosamine N-acyltransferase, found in Delftia acidovorans (strain DSM 14801 / SPH-1).